The primary structure comprises 361 residues: Beta-hexosaminidase (361 aa).

Substrate-binding positions include D69, R77, R144, and 174–175 (KH). The active-site Proton donor/acceptor is the H187. Catalysis depends on D258, which acts as the Nucleophile.

It belongs to the glycosyl hydrolase 3 family. NagZ subfamily.

The protein localises to the cytoplasm. The enzyme catalyses Hydrolysis of terminal non-reducing N-acetyl-D-hexosamine residues in N-acetyl-beta-D-hexosaminides.. Its pathway is cell wall biogenesis; peptidoglycan recycling. Plays a role in peptidoglycan recycling by cleaving the terminal beta-1,4-linked N-acetylglucosamine (GlcNAc) from peptide-linked peptidoglycan fragments, giving rise to free GlcNAc, anhydro-N-acetylmuramic acid and anhydro-N-acetylmuramic acid-linked peptides. This Neisseria meningitidis serogroup A / serotype 4A (strain DSM 15465 / Z2491) protein is Beta-hexosaminidase.